Reading from the N-terminus, the 571-residue chain is Cyclic di-GMP phosphodiesterase TpdA (571 aa).

3 consecutive transmembrane segments (helical) span residues 155-175, 321-341, and 395-415; these read IAWV…YAIN, VYYI…FLVI, and TLIS…AIYA. The 228-residue stretch at 344–571 folds into the EAL domain; that stretch reads HRSLQAFITY…HQGYFYPLHF (228 aa).

It is found in the cell inner membrane. The enzyme catalyses 3',3'-c-di-GMP + H2O = 5'-phosphoguanylyl(3'-&gt;5')guanosine + H(+). Cyclic di-GMP phosphodiesterase that plays an important role in modulating the global c-di-GMP pool. Its ability to alter the c-di-GMP pool has an effect on swimming motility, swarming motility and biofilm formation, multicellular behaviors that are important for the survival and dissemination of this environmental pathogen. Exhibits a dual function, namely, c-di-GMP degradation and modulation of its own expression. This chain is Cyclic di-GMP phosphodiesterase TpdA, found in Vibrio parahaemolyticus serotype O3:K6 (strain RIMD 2210633).